Consider the following 1272-residue polypeptide: uncharacterized protein (1272 aa).

This is an uncharacterized protein from Methanocaldococcus jannaschii (strain ATCC 43067 / DSM 2661 / JAL-1 / JCM 10045 / NBRC 100440) (Methanococcus jannaschii).